Here is a 242-residue protein sequence, read N- to C-terminus: Potassium/proton antiporter CemA (242 aa).

Transmembrane regions (helical) follow at residues 116-136 and 200-220; these read IIFCLSTNIISFTILSGYSIL and ISGFVSTFPVFLDTFFKYLIF.

It belongs to the CemA family.

The protein localises to the plastid. It localises to the chloroplast inner membrane. It catalyses the reaction K(+)(in) + H(+)(out) = K(+)(out) + H(+)(in). Functionally, contributes to K(+)/H(+) antiport activity by supporting proton efflux to control proton extrusion and homeostasis in chloroplasts in a light-dependent manner to modulate photosynthesis. Prevents excessive induction of non-photochemical quenching (NPQ) under continuous-light conditions. Indirectly promotes efficient inorganic carbon uptake into chloroplasts. The polypeptide is Potassium/proton antiporter CemA (Chloranthus spicatus (Chulantree)).